A 252-amino-acid polypeptide reads, in one-letter code: Imidazole glycerol phosphate synthase subunit HisF (252 aa).

Residues D11 and D130 contribute to the active site.

Belongs to the HisA/HisF family. Heterodimer of HisH and HisF.

The protein localises to the cytoplasm. It carries out the reaction 5-[(5-phospho-1-deoxy-D-ribulos-1-ylimino)methylamino]-1-(5-phospho-beta-D-ribosyl)imidazole-4-carboxamide + L-glutamine = D-erythro-1-(imidazol-4-yl)glycerol 3-phosphate + 5-amino-1-(5-phospho-beta-D-ribosyl)imidazole-4-carboxamide + L-glutamate + H(+). The protein operates within amino-acid biosynthesis; L-histidine biosynthesis; L-histidine from 5-phospho-alpha-D-ribose 1-diphosphate: step 5/9. In terms of biological role, IGPS catalyzes the conversion of PRFAR and glutamine to IGP, AICAR and glutamate. The HisF subunit catalyzes the cyclization activity that produces IGP and AICAR from PRFAR using the ammonia provided by the HisH subunit. The polypeptide is Imidazole glycerol phosphate synthase subunit HisF (Bacillus cereus (strain Q1)).